A 396-amino-acid polypeptide reads, in one-letter code: Adenosine deaminase 1 (396 aa).

Residues 1 to 26 are disordered; the sequence is MTSRSTEKSAAANPAAVSKTPSPDRI. Zn(2+) is bound by residues H35 and H37. 3 residues coordinate substrate: H37, D39, and G197. H224 contacts Zn(2+). E227 serves as the catalytic Proton donor. D316 is a Zn(2+) binding site.

The protein belongs to the metallo-dependent hydrolases superfamily. Adenosine and AMP deaminases family. Adenosine deaminase subfamily. Homotetramer. The cofactor is Zn(2+).

The catalysed reaction is adenosine + H2O + H(+) = inosine + NH4(+). It carries out the reaction 2'-deoxyadenosine + H2O + H(+) = 2'-deoxyinosine + NH4(+). Its activity is regulated as follows. Coformycin and 2'-deoxycoformycin, whose structures mimic the transition state of the deamination reaction, are potent competitive inhibitors. In terms of biological role, catalyzes the hydrolytic deamination of adenosine and 2-deoxyadenosine. The sequence is that of Adenosine deaminase 1 from Streptomyces coelicolor (strain ATCC BAA-471 / A3(2) / M145).